A 136-amino-acid chain; its full sequence is Transcription antitermination protein NusB (136 aa).

This sequence belongs to the NusB family.

Functionally, involved in transcription antitermination. Required for transcription of ribosomal RNA (rRNA) genes. Binds specifically to the boxA antiterminator sequence of the ribosomal RNA (rrn) operons. This Pseudoalteromonas translucida (strain TAC 125) protein is Transcription antitermination protein NusB.